The primary structure comprises 125 residues: Fluoride-specific ion channel FluC (125 aa).

4 helical membrane passes run 4 to 24 (LMLVCLGGAIGAGMRHLTVTA), 32 to 52 (AFPWGTLAVNVAGSFAMGLLV), 67 to 87 (LLLAPGMLGGFTTFSAFSLDV), and 100 to 120 (LAYVLASVAGSILALFVGLWL). The Na(+) site is built by G75 and T78.

This sequence belongs to the fluoride channel Fluc/FEX (TC 1.A.43) family.

The protein resides in the cell inner membrane. It carries out the reaction fluoride(in) = fluoride(out). Its activity is regulated as follows. Na(+) is not transported, but it plays an essential structural role and its presence is essential for fluoride channel function. Its function is as follows. Fluoride-specific ion channel. Important for reducing fluoride concentration in the cell, thus reducing its toxicity. This chain is Fluoride-specific ion channel FluC, found in Chelativorans sp. (strain BNC1).